The primary structure comprises 57 residues: UPF0391 membrane protein Smed_4051 (57 aa).

2 consecutive transmembrane segments (helical) span residues 4 to 24 (WALIFFVISLIAGFLGFSGIS) and 33 to 53 (ILFYIAVIIFLVFLVLALAVG).

Belongs to the UPF0391 family.

Its subcellular location is the cell membrane. The sequence is that of UPF0391 membrane protein Smed_4051 from Sinorhizobium medicae (strain WSM419) (Ensifer medicae).